The following is a 548-amino-acid chain: Chaperonin GroEL (548 aa).

Residues 29–32 (TLGP), Lys-50, 86–90 (DGTTT), Gly-416, and Asp-497 contribute to the ATP site.

Belongs to the chaperonin (HSP60) family. Forms a cylinder of 14 subunits composed of two heptameric rings stacked back-to-back. Interacts with the co-chaperonin GroES.

The protein localises to the cytoplasm. The catalysed reaction is ATP + H2O + a folded polypeptide = ADP + phosphate + an unfolded polypeptide.. In terms of biological role, together with its co-chaperonin GroES, plays an essential role in assisting protein folding. The GroEL-GroES system forms a nano-cage that allows encapsulation of the non-native substrate proteins and provides a physical environment optimized to promote and accelerate protein folding. This chain is Chaperonin GroEL, found in Neorickettsia sennetsu (strain ATCC VR-367 / Miyayama) (Ehrlichia sennetsu).